We begin with the raw amino-acid sequence, 539 residues long: Chaperonin GroEL 1 (539 aa).

Residues 29–32 (TLGP), 86–90 (DGTTT), G413, and D493 each bind ATP.

This sequence belongs to the chaperonin (HSP60) family. Forms a cylinder of 14 subunits composed of two heptameric rings stacked back-to-back. Interacts with the co-chaperonin GroES.

The protein resides in the cytoplasm. It catalyses the reaction ATP + H2O + a folded polypeptide = ADP + phosphate + an unfolded polypeptide.. Together with its co-chaperonin GroES, plays an essential role in assisting protein folding. The GroEL-GroES system forms a nano-cage that allows encapsulation of the non-native substrate proteins and provides a physical environment optimized to promote and accelerate protein folding. This chain is Chaperonin GroEL 1, found in Acidothermus cellulolyticus (strain ATCC 43068 / DSM 8971 / 11B).